The primary structure comprises 642 residues: Threonine--tRNA ligase (642 aa).

Residues 1-61 (MPVITLPDGS…ETDAELSIIT (61 aa)) enclose the TGS domain. A catalytic region spans residues 243–534 (DHRKIGKQLD…LIEEYAGRFP (292 aa)). 3 residues coordinate Zn(2+): cysteine 334, histidine 385, and histidine 511.

Belongs to the class-II aminoacyl-tRNA synthetase family. Homodimer. Zn(2+) serves as cofactor.

It is found in the cytoplasm. It carries out the reaction tRNA(Thr) + L-threonine + ATP = L-threonyl-tRNA(Thr) + AMP + diphosphate + H(+). In terms of biological role, catalyzes the attachment of threonine to tRNA(Thr) in a two-step reaction: L-threonine is first activated by ATP to form Thr-AMP and then transferred to the acceptor end of tRNA(Thr). Also edits incorrectly charged L-seryl-tRNA(Thr). This is Threonine--tRNA ligase from Shewanella baltica (strain OS195).